Reading from the N-terminus, the 142-residue chain is uncharacterized protein (142 aa).

A Peptidase C39 domain is found at Q18–V137.

This is an uncharacterized protein from Methanothermobacter thermautotrophicus (strain ATCC 29096 / DSM 1053 / JCM 10044 / NBRC 100330 / Delta H) (Methanobacterium thermoautotrophicum).